We begin with the raw amino-acid sequence, 327 residues long: DNA-directed RNA polymerase subunit alpha (327 aa).

The segment at M1 to E233 is alpha N-terminal domain (alpha-NTD). Residues L267–K327 form an alpha C-terminal domain (alpha-CTD) region.

It belongs to the RNA polymerase alpha chain family. In terms of assembly, in plastids the minimal PEP RNA polymerase catalytic core is composed of four subunits: alpha, beta, beta', and beta''. When a (nuclear-encoded) sigma factor is associated with the core the holoenzyme is formed, which can initiate transcription.

Its subcellular location is the plastid. The protein resides in the chloroplast. The enzyme catalyses RNA(n) + a ribonucleoside 5'-triphosphate = RNA(n+1) + diphosphate. DNA-dependent RNA polymerase catalyzes the transcription of DNA into RNA using the four ribonucleoside triphosphates as substrates. In Lobularia maritima (Sweet alyssum), this protein is DNA-directed RNA polymerase subunit alpha.